A 262-amino-acid chain; its full sequence is Glucosamine-6-phosphate deaminase (262 aa).

The active-site Proton acceptor; for enolization step is the Asp-63. The active-site For ring-opening step is the Asn-129. His-131 serves as the catalytic Proton acceptor; for ring-opening step. Glu-136 serves as the catalytic For ring-opening step.

Belongs to the glucosamine/galactosamine-6-phosphate isomerase family. NagB subfamily.

It catalyses the reaction alpha-D-glucosamine 6-phosphate + H2O = beta-D-fructose 6-phosphate + NH4(+). It functions in the pathway amino-sugar metabolism; N-acetylneuraminate degradation; D-fructose 6-phosphate from N-acetylneuraminate: step 5/5. Catalyzes the reversible isomerization-deamination of glucosamine 6-phosphate (GlcN6P) to form fructose 6-phosphate (Fru6P) and ammonium ion. This is Glucosamine-6-phosphate deaminase from Bacillus cereus (strain G9842).